The sequence spans 68 residues: Large ribosomal subunit protein uL29 (68 aa).

The protein belongs to the universal ribosomal protein uL29 family.

In Nitrobacter winogradskyi (strain ATCC 25391 / DSM 10237 / CIP 104748 / NCIMB 11846 / Nb-255), this protein is Large ribosomal subunit protein uL29.